A 382-amino-acid polypeptide reads, in one-letter code: Succinyl-diaminopimelate desuccinylase (382 aa).

His73 contributes to the Zn(2+) binding site. The active site involves Asp75. Asp106 lines the Zn(2+) pocket. The Proton acceptor role is filled by Glu140. Zn(2+) is bound by residues Glu141, Glu169, and His355.

It belongs to the peptidase M20A family. DapE subfamily. Homodimer. Requires Zn(2+) as cofactor. Co(2+) is required as a cofactor.

The catalysed reaction is N-succinyl-(2S,6S)-2,6-diaminopimelate + H2O = (2S,6S)-2,6-diaminopimelate + succinate. Its pathway is amino-acid biosynthesis; L-lysine biosynthesis via DAP pathway; LL-2,6-diaminopimelate from (S)-tetrahydrodipicolinate (succinylase route): step 3/3. Functionally, catalyzes the hydrolysis of N-succinyl-L,L-diaminopimelic acid (SDAP), forming succinate and LL-2,6-diaminopimelate (DAP), an intermediate involved in the bacterial biosynthesis of lysine and meso-diaminopimelic acid, an essential component of bacterial cell walls. The polypeptide is Succinyl-diaminopimelate desuccinylase (Leptothrix cholodnii (strain ATCC 51168 / LMG 8142 / SP-6) (Leptothrix discophora (strain SP-6))).